Reading from the N-terminus, the 705-residue chain is 3-hydroxypropionate--CoA ligase [ADP-forming] (705 aa).

One can recognise an ATP-grasp domain in the interval 25-61 (KSILKNYGVKVPPYALVTSAEEAAKEAKKIGFPLVMK). 51 to 61 (AKKIGFPLVMK) is an ATP binding site.

In the N-terminal section; belongs to the acetate CoA ligase beta subunit family. The protein in the C-terminal section; belongs to the acetate CoA ligase alpha subunit family. It depends on Mg(2+) as a cofactor. Mn(2+) serves as cofactor.

It catalyses the reaction 3-hydroxypropanoate + ATP + CoA = 3-hydroxypropanoyl-CoA + ADP + phosphate. In terms of biological role, involved in thaumarchaeal hydroxypropionate/hydroxybutyrate (HP/HB) cycle, a modified version of the autotrophic HP/HB cycle of Crenarchaeota. Catalyzes the formation of 3-hydroxypropionyl-CoA, ADP and phosphate from 3-hydroxypropionate, coenzyme A (CoA) and ATP. Can also use 4-hydroxybutyrate, propionate and butyrate, with poor catalytic efficiency. The protein is 3-hydroxypropionate--CoA ligase [ADP-forming] of Nitrosopumilus maritimus (strain SCM1).